A 368-amino-acid chain; its full sequence is 2-aminoethylphosphonate--pyruvate transaminase (368 aa).

An N6-(pyridoxal phosphate)lysine modification is found at K192.

The protein belongs to the class-V pyridoxal-phosphate-dependent aminotransferase family. PhnW subfamily. In terms of assembly, homodimer. Pyridoxal 5'-phosphate is required as a cofactor.

It catalyses the reaction (2-aminoethyl)phosphonate + pyruvate = phosphonoacetaldehyde + L-alanine. Its function is as follows. Involved in phosphonate degradation. This is 2-aminoethylphosphonate--pyruvate transaminase from Pseudomonas putida (strain GB-1).